We begin with the raw amino-acid sequence, 119 residues long: Large ribosomal subunit protein uL14 (119 aa).

The protein belongs to the universal ribosomal protein uL14 family. In terms of assembly, part of the 50S ribosomal subunit. Forms a cluster with proteins L3 and L19. In the 70S ribosome, L14 and L19 interact and together make contacts with the 16S rRNA in bridges B5 and B8.

Binds to 23S rRNA. Forms part of two intersubunit bridges in the 70S ribosome. This is Large ribosomal subunit protein uL14 from Ehrlichia chaffeensis (strain ATCC CRL-10679 / Arkansas).